Consider the following 724-residue polypeptide: Small conductance calcium-activated potassium channel protein 3 (724 aa).

Residues 1–11 (MDTSGHFHDSG) show a composition bias toward basic and acidic residues. Disordered stretches follow at residues 1–161 (MDTS…RDSN) and 232–251 (ATHN…FPKA). A compositionally biased stretch (pro residues) spans 34 to 58 (QPPPPPPPPAPPAAPQQPPGPPLQP). A compositionally biased stretch (low complexity) spans 59–88 (QPLQLQQQQQQQQQQPPHPLSQLAQLQSQP). The segment covering 105 to 125 (PSSNSTAILHPSSRQGSQLNL) has biased composition (polar residues). A compositionally biased stretch (low complexity) spans 131-140 (GHSPSSTATS). Residue Ser160 is modified to Phosphoserine. Residues 232 to 249 (ATHNHQHAGTTASSTTFP) show a composition bias toward polar residues. The helical transmembrane segment at 281-301 (LIFGMFGIVVMVIETELSWGL) threads the bilayer. The chain crosses the membrane as a helical span at residues 308–328 (FSLALKCLISLSTIILLGLII). A helical transmembrane segment spans residues 359-379 (ISLEMLVCAIHPIPGEYKFFW). The helical transmembrane segment at 398–418 (IILSIPMFLRLYLIARVMLLH) threads the bilayer. Residues 447–467 (LMTICPGTVLLVFSISLWIIA) traverse the membrane as a helical segment. The pore-forming intramembrane region spans 487–507 (FLGAMWLISITFLSIGYGDMV). A helical membrane pass occupies residues 516 to 536 (VCLLTGIMGAGCTALVVAVVA). The tract at residues 554-630 (DTQLTKRIKN…LVDLSKMQNV (77 aa)) is calmodulin-binding. Residues 635–662 (ITELNDRSEDLEKQIGSLESKLEHLTAS) are a coiled coil. Residues 702 to 724 (LSDSPIGVSSTSFPTPYTSSSSC) are disordered. Residues 710–724 (SSTSFPTPYTSSSSC) show a composition bias toward low complexity.

Belongs to the potassium channel KCNN family. KCa2.3/KCNN3 subfamily. As to quaternary structure, homodimer. Heteromultimer with KCNN2 or KCNN1; this modulates plasma membrane expression and consequently the small conductance calcium-activated potassium channel activity. The complex is composed of 4 channel subunits each of which binds to a calmodulin subunit which regulates the channel activity through calcium-binding. Interacts with CALM1.

The protein localises to the cell membrane. The protein resides in the cytoplasm. It is found in the myofibril. It localises to the sarcomere. Its subcellular location is the z line. The enzyme catalyses K(+)(in) = K(+)(out). Inhibited by bee venom neurotoxin apamin. Its function is as follows. Small conductance calcium-activated potassium channel that mediates the voltage-independent transmembrane transfer of potassium across the cell membrane through a constitutive interaction with calmodulin which binds the intracellular calcium allowing its opening. The current is characterized by a voltage-independent activation, an intracellular calcium concentration increase-dependent activation and a single-channel conductance of 10 picosiemens. Also presents an inwardly rectifying current, thus reducing its already small outward conductance of potassium ions, which is particularly the case when the membrane potential displays positive values, above + 20 mV. Activation is followed by membrane hyperpolarization. Thought to regulate neuronal excitability by contributing to the slow component of synaptic afterhyperpolarization. This is Small conductance calcium-activated potassium channel protein 3 from Sus scrofa (Pig).